The chain runs to 539 residues: GMP synthase [glutamine-hydrolyzing] (539 aa).

One can recognise a Glutamine amidotransferase type-1 domain in the interval 4-202; it reads KILILDFGSQ…VLQIAGCKPD (199 aa). The Nucleophile role is filled by C81. Residues H176 and E178 contribute to the active site. In terms of domain architecture, GMPS ATP-PPase spans 203 to 395; it reads WVMRDHIEEA…LGLPPEMVYR (193 aa). 230–236 contacts ATP; the sequence is SGGVDSS.

As to quaternary structure, homodimer.

The enzyme catalyses XMP + L-glutamine + ATP + H2O = GMP + L-glutamate + AMP + diphosphate + 2 H(+). Its pathway is purine metabolism; GMP biosynthesis; GMP from XMP (L-Gln route): step 1/1. In terms of biological role, catalyzes the synthesis of GMP from XMP. The chain is GMP synthase [glutamine-hydrolyzing] from Cupriavidus taiwanensis (strain DSM 17343 / BCRC 17206 / CCUG 44338 / CIP 107171 / LMG 19424 / R1) (Ralstonia taiwanensis (strain LMG 19424)).